A 432-amino-acid polypeptide reads, in one-letter code: CLOCK-interacting pacemaker (432 aa).

Disordered stretches follow at residues 71 to 98 and 194 to 315; these read ADSDKDSGFSDGSSECLSSAEQMESEDM and SYTK…SSPL. Position 246 is a phosphoserine (S246). Over residues 272–283 the composition is skewed to polar residues; the sequence is SPQTLQPVSSSH. Residues 364-395 are a coiled coil; it reads EITLKTKELIRQNQATQAELDQLKEQTQMFIE. Residues 408-432 form a disordered region; sequence LQASLTSGSSHSGSDLDTLSDHPDV. Positions 411–424 are enriched in low complexity; the sequence is SLTSGSSHSGSDLD.

As to quaternary structure, interacts with CLOCK. Forms a ternary complex with the CLOCK-BMAL1 heterodimer. Interacts with CAD and HSPA5. Expressed in the heart, kidney and liver and shows a circadian oscillation in these tissues with a peak at circadian time 14 hours (at protein level). Expressed in the brain, including the suprachiasmatic nucleus (SCN) of the brain, and in multiple peripheral tissues such as heart, liver and kidney. Exhibits a circadian oscillation in the peripheral tissues with a peak at circadian time 14 hours.

It localises to the nucleus. The protein resides in the cytoplasm. It is found in the cytosol. Transcriptional repressor which may act as a negative-feedback regulator of CLOCK-BMAL1 transcriptional activity in the circadian-clock mechanism. May stimulate BMAL1-dependent phosphorylation of CLOCK. However, the physiological relevance of these observations is unsure, since experiments in knockout mice showed that CIPC is not critially required for basic circadian clock. The polypeptide is CLOCK-interacting pacemaker (Cipc) (Mus musculus (Mouse)).